We begin with the raw amino-acid sequence, 137 residues long: Small ribosomal subunit protein uS12 (137 aa).

Positions 1-26 (MPTINQLVRKPRQSKIKKSTSPALNK) are disordered. Basic residues predominate over residues 9 to 18 (RKPRQSKIKK).

This sequence belongs to the universal ribosomal protein uS12 family. In terms of assembly, part of the 30S ribosomal subunit. Contacts proteins S8 and S17. May interact with IF1 in the 30S initiation complex.

With S4 and S5 plays an important role in translational accuracy. Its function is as follows. Interacts with and stabilizes bases of the 16S rRNA that are involved in tRNA selection in the A site and with the mRNA backbone. Located at the interface of the 30S and 50S subunits, it traverses the body of the 30S subunit contacting proteins on the other side and probably holding the rRNA structure together. The combined cluster of proteins S8, S12 and S17 appears to hold together the shoulder and platform of the 30S subunit. This is Small ribosomal subunit protein uS12 from Listeria innocua serovar 6a (strain ATCC BAA-680 / CLIP 11262).